Reading from the N-terminus, the 158-residue chain is MPDMANVESFDLDHTKVKAPYVRLAGVKTTPKGDQISKYDLRFLQPNQGAIDPAAIHTLEHLLAGYMRDHLEGVVDVSPMGCRTGMYMAVIGEPDEQGVMKAFEAALKDTAGHDQPIPGVSELECGNYRDHDLAAARQHARDVLDQGLKVQETILLER.

Fe cation contacts are provided by His57, His61, and Cys125.

It belongs to the LuxS family. As to quaternary structure, homodimer. Fe cation is required as a cofactor.

It carries out the reaction S-(5-deoxy-D-ribos-5-yl)-L-homocysteine = (S)-4,5-dihydroxypentane-2,3-dione + L-homocysteine. Its function is as follows. Involved in the synthesis of autoinducer 2 (AI-2) which is secreted by bacteria and is used to communicate both the cell density and the metabolic potential of the environment. The regulation of gene expression in response to changes in cell density is called quorum sensing. Catalyzes the transformation of S-ribosylhomocysteine (RHC) to homocysteine (HC) and 4,5-dihydroxy-2,3-pentadione (DPD). The sequence is that of S-ribosylhomocysteine lyase from Deinococcus radiodurans (strain ATCC 13939 / DSM 20539 / JCM 16871 / CCUG 27074 / LMG 4051 / NBRC 15346 / NCIMB 9279 / VKM B-1422 / R1).